Reading from the N-terminus, the 146-residue chain is Snaclec rhodocytin subunit beta (146 aa).

Positions 1 to 23 are cleaved as a signal peptide; the sequence is MGRFIFVSFGLLVVFLSLSGTGA. Disulfide bonds link Cys25/Cys36, Cys53/Cys142, and Cys119/Cys134. Residues 32-143 enclose the C-type lectin domain; it reads YEGHCYKPFN…CSSTCSFVCK (112 aa).

Belongs to the snaclec family. In terms of assembly, dimer (non-covalently linked) of heterodimers of subunits alpha and beta (disulfide-linked). As to expression, expressed by the venom gland.

It is found in the secreted. Functionally, elicits platelet aggregation by the binding to the C-type lectin domain family 1 member B (CLEC1B/CLEC2). Binding leads to tyrosine phosphorylation in the cytoplasmic tail of CLEC1B, which promotes the binding of spleen tyrosine kinase (Syk), subsequent activation of PLCgamma2, and platelet activation and aggregation. Binding to GPIbalpha (GP1BA) and alpha2/beta-1 (ITGA2/ITGB1) may also induce aggregation, but this is controversial. The sequence is that of Snaclec rhodocytin subunit beta from Calloselasma rhodostoma (Malayan pit viper).